Consider the following 349-residue polypeptide: Ion-translocating oxidoreductase complex subunit D (349 aa).

A run of 3 helical transmembrane segments spans residues 36–56 (CAFF…VALS), 77–99 (SAML…WMIV), and 124–144 (AMAA…TWIA). Threonine 185 carries the post-translational modification FMN phosphoryl threonine. Helical transmembrane passes span 212 to 232 (STGV…IVLL), 239 to 259 (WHIS…GFLL), 265 to 285 (ASPL…FIAT), 291 to 311 (ATSP…VYII), and 315 to 335 (GGYP…APFI).

This sequence belongs to the NqrB/RnfD family. The complex is composed of six subunits: RnfA, RnfB, RnfC, RnfD, RnfE and RnfG. It depends on FMN as a cofactor.

The protein resides in the cell inner membrane. Its function is as follows. Part of a membrane-bound complex that couples electron transfer with translocation of ions across the membrane. The polypeptide is Ion-translocating oxidoreductase complex subunit D (Shewanella oneidensis (strain ATCC 700550 / JCM 31522 / CIP 106686 / LMG 19005 / NCIMB 14063 / MR-1)).